The chain runs to 361 residues: Septin-2 (361 aa).

Tyr17 carries the phosphotyrosine modification. The Septin-type G domain maps to 34 to 306 (KGFEFTLMVV…ENFRSERLKR (273 aa)). Residues 44-51 (GESGLGKS) form a G1 motif region. GTP is bound by residues 44–51 (GESGLGKS), Thr78, Gly104, and 183–191 (KADTLTLKE). Residues 101–104 (DTPG) are G3 motif. Residues 182-185 (AKAD) form a G4 motif region. An N6-acetyllysine modification is found at Lys190. Tyr211 bears the Phosphotyrosine mark. A Phosphoserine modification is found at Ser218. GTP-binding residues include Gly241 and Arg256. The interval 260-270 (WGVVEVENPEH) is important for dimerization.

Belongs to the TRAFAC class TrmE-Era-EngA-EngB-Septin-like GTPase superfamily. Septin GTPase family. Septins polymerize into heterooligomeric protein complexes that form filaments, and associate with cellular membranes, actin filaments and microtubules. GTPase activity is required for filament formation. Filaments are assembled from asymmetrical heterotrimers, composed of SEPTIN2, SEPTIN6 and SEPTIN7 that associate head-to-head to form a hexameric unit. Interaction between SEPTIN2 and SEPTIN7 seems indirect. Interacts with SEPTIN5. Interaction with SEPTIN4 not detected. Interacts with SEPTIN9. Component of a septin core octameric complex consisting of SEPTIN12, SEPTIN7, SEPTIN6 and SEPTIN2 or SEPTIN4 in the order 12-7-6-2-2-6-7-12 or 12-7-6-4-4-6-7-12 and located in the sperm annulus. Interacts with MAP4. Interacts with DZIP1L.

It localises to the cytoplasm. Its subcellular location is the cytoskeleton. The protein localises to the spindle. It is found in the chromosome. The protein resides in the centromere. It localises to the kinetochore. Its subcellular location is the cleavage furrow. The protein localises to the midbody. It is found in the cell cortex. The protein resides in the cell projection. It localises to the cilium membrane. Its subcellular location is the cilium. The protein localises to the flagellum. Functionally, filament-forming cytoskeletal GTPase. Forms a filamentous structure with SEPTIN12, SEPTIN6, SEPTIN2 and probably SEPTIN4 at the sperm annulus which is required for the structural integrity and motility of the sperm tail during postmeiotic differentiation. Required for normal organization of the actin cytoskeleton. Plays a role in the biogenesis of polarized columnar-shaped epithelium by maintaining polyglutamylated microtubules, thus facilitating efficient vesicle transport, and by impeding MAP4 binding to tubulin. Required for the progression through mitosis. Forms a scaffold at the midplane of the mitotic splindle required to maintain CENPE localization at kinetochores and consequently chromosome congression. During anaphase, may be required for chromosome segregation and spindle elongation. Plays a role in ciliogenesis and collective cell movements. In cilia, required for the integrity of the diffusion barrier at the base of the primary cilium that prevents diffusion of transmembrane proteins between the cilia and plasma membranes: probably acts by regulating the assembly of the tectonic-like complex (also named B9 complex) by localizing TMEM231 protein. The polypeptide is Septin-2 (Bos taurus (Bovine)).